The following is an 879-amino-acid chain: Alanine--tRNA ligase (879 aa).

The disordered stretch occupies residues 426-449 (KQKERARNARGNMDGESWKEDPLS). 4 residues coordinate Zn(2+): His-566, His-570, Cys-668, and His-672.

It belongs to the class-II aminoacyl-tRNA synthetase family. Requires Zn(2+) as cofactor.

Its subcellular location is the cytoplasm. It carries out the reaction tRNA(Ala) + L-alanine + ATP = L-alanyl-tRNA(Ala) + AMP + diphosphate. Its function is as follows. Catalyzes the attachment of alanine to tRNA(Ala) in a two-step reaction: alanine is first activated by ATP to form Ala-AMP and then transferred to the acceptor end of tRNA(Ala). Also edits incorrectly charged Ser-tRNA(Ala) and Gly-tRNA(Ala) via its editing domain. The protein is Alanine--tRNA ligase of Clostridioides difficile (strain 630) (Peptoclostridium difficile).